The primary structure comprises 121 residues: Large ribosomal subunit protein bL12 (121 aa).

The protein belongs to the bacterial ribosomal protein bL12 family. As to quaternary structure, homodimer. Part of the ribosomal stalk of the 50S ribosomal subunit. Forms a multimeric L10(L12)X complex, where L10 forms an elongated spine to which 2 to 4 L12 dimers bind in a sequential fashion. Binds GTP-bound translation factors.

In terms of biological role, forms part of the ribosomal stalk which helps the ribosome interact with GTP-bound translation factors. Is thus essential for accurate translation. The polypeptide is Large ribosomal subunit protein bL12 (Pediococcus pentosaceus (strain ATCC 25745 / CCUG 21536 / LMG 10740 / 183-1w)).